We begin with the raw amino-acid sequence, 124 residues long: Large ribosomal subunit protein bL12 (124 aa).

It belongs to the bacterial ribosomal protein bL12 family. Homodimer. Part of the ribosomal stalk of the 50S ribosomal subunit. Forms a multimeric L10(L12)X complex, where L10 forms an elongated spine to which 2 to 4 L12 dimers bind in a sequential fashion. Binds GTP-bound translation factors.

Forms part of the ribosomal stalk which helps the ribosome interact with GTP-bound translation factors. Is thus essential for accurate translation. In Dehalococcoides mccartyi (strain ATCC BAA-2266 / KCTC 15142 / 195) (Dehalococcoides ethenogenes (strain 195)), this protein is Large ribosomal subunit protein bL12.